The primary structure comprises 167 residues: Phosphopantetheine adenylyltransferase (167 aa).

T13 serves as a coordination point for substrate. ATP-binding positions include 13 to 14 (TF) and H21. Substrate contacts are provided by K45, L78, and R92. ATP is bound by residues 93–95 (GLR), E103, and 128–134 (TQFISSS).

The protein belongs to the bacterial CoaD family. As to quaternary structure, homohexamer. Requires Mg(2+) as cofactor.

It localises to the cytoplasm. It carries out the reaction (R)-4'-phosphopantetheine + ATP + H(+) = 3'-dephospho-CoA + diphosphate. Its pathway is cofactor biosynthesis; coenzyme A biosynthesis; CoA from (R)-pantothenate: step 4/5. Its function is as follows. Reversibly transfers an adenylyl group from ATP to 4'-phosphopantetheine, yielding dephospho-CoA (dPCoA) and pyrophosphate. In Wolbachia sp. subsp. Brugia malayi (strain TRS), this protein is Phosphopantetheine adenylyltransferase.